We begin with the raw amino-acid sequence, 391 residues long: NAD(P)H-quinone oxidoreductase subunit H, chloroplastic (391 aa).

Belongs to the complex I 49 kDa subunit family. In terms of assembly, NDH is composed of at least 16 different subunits, 5 of which are encoded in the nucleus.

The protein localises to the plastid. It is found in the chloroplast thylakoid membrane. The enzyme catalyses a plastoquinone + NADH + (n+1) H(+)(in) = a plastoquinol + NAD(+) + n H(+)(out). The catalysed reaction is a plastoquinone + NADPH + (n+1) H(+)(in) = a plastoquinol + NADP(+) + n H(+)(out). Its function is as follows. NDH shuttles electrons from NAD(P)H:plastoquinone, via FMN and iron-sulfur (Fe-S) centers, to quinones in the photosynthetic chain and possibly in a chloroplast respiratory chain. The immediate electron acceptor for the enzyme in this species is believed to be plastoquinone. Couples the redox reaction to proton translocation, and thus conserves the redox energy in a proton gradient. In Nephroselmis olivacea (Green alga), this protein is NAD(P)H-quinone oxidoreductase subunit H, chloroplastic.